We begin with the raw amino-acid sequence, 609 residues long: Meiotically up-regulated gene 28 protein (609 aa).

2 consecutive RRM domains span residues 20–103 (ISIY…YTHI) and 419–499 (CNLF…YAEK).

It localises to the cytoplasm. Has a role in sporulation. This Schizosaccharomyces pombe (strain 972 / ATCC 24843) (Fission yeast) protein is Meiotically up-regulated gene 28 protein (mug28).